Consider the following 384-residue polypeptide: Beta-ureidopropionase (384 aa).

The CN hydrolase domain maps to 72–344 (VHVGLVQNRI…DGLLVAKLDL (273 aa)). The active-site Proton acceptor is the Glu119. Lys196 (proton donor) is an active-site residue. Cys233 acts as the Nucleophile in catalysis. Ser378 is modified (phosphoserine).

Belongs to the carbon-nitrogen hydrolase superfamily. BUP family. In terms of assembly, homodimer, homotetramer, homooctamer; can also form higher homooligomers. As to expression, detected in liver (at protein level).

It is found in the cytoplasm. It catalyses the reaction 3-(carbamoylamino)propanoate + H2O + 2 H(+) = beta-alanine + NH4(+) + CO2. It carries out the reaction 3-(carbamoylamino)-2-methylpropanoate + H2O + 2 H(+) = (R)-3-amino-2-methylpropanoate + NH4(+) + CO2. It participates in amino-acid biosynthesis; beta-alanine biosynthesis. Strongly inhibited by 50 mM Zn(2+). Not inhibited by EDTA. Competitively inhibited by beta-alanine, 5-aminolevulinic acid (ALA), beta-aminoisobutyrate and 4-ureidobutyrate. In terms of biological role, catalyzes a late step in pyrimidine degradation. Converts N-carbamoyl-beta-alanine (3-ureidopropanoate) into beta-alanine, ammonia and carbon dioxide. Likewise, converts N-carbamoyl-beta-aminoisobutyrate (3-ureidoisobutyrate) into beta-aminoisobutyrate, ammonia and carbon dioxide. This is Beta-ureidopropionase (UPB1) from Homo sapiens (Human).